The chain runs to 239 residues: Probable transcriptional regulatory protein ACL_0044 (239 aa).

The protein belongs to the TACO1 family.

The protein localises to the cytoplasm. The protein is Probable transcriptional regulatory protein ACL_0044 of Acholeplasma laidlawii (strain PG-8A).